Here is a 366-residue protein sequence, read N- to C-terminus: N-methyltransferase fsqC (366 aa).

The N-terminal stretch at 1-18 is a signal peptide; sequence MSSNVQDIRGWPPPFANA. Residue N270 is glycosylated (N-linked (GlcNAc...) asparagine).

This sequence belongs to the methyltransferase superfamily.

The protein operates within secondary metabolite biosynthesis. Its function is as follows. N-methyltransferase; part of the gene cluster that mediates the biosynthesis of the isoquinoline alkaloids fumisoquin A, fumisoquin B and fumisoquin C; as well as small amounts of fumipyrrole as a shunt metabolite. The products of the cluster lead to a brown coloration and are important for growth and conidiation. The nonribosomal peptide synthetase-like protein fsqF, which lacks a canonical condensation domain, is required for addition of a serine-derived dehydroalanine moiety to activated tyrosine but is not essential for the subsequent steps leading to isoquinoline formation. A different enzyme, most likely the ATP-grasp enzyme fsqD, is responsible for activation of tyrosine. Three additional enzymes encoded by the fsq cluster, the N-methyltransferase fsqC, the phenol 2-monooxygenase fsqG and the FAD-dependent oxidase fsqB, catalyze the formation of the isoquinoline ring system in the fumisoquins. FsqB converts the fspF thiolation domain-bound (2S,4S,5S)-2-amino-6-(3,4-dihydroxyphenyl)-4-hydroxy-5-(methylamino)hexanoyl into isoquinoline. The cyclization most likely proceeds via a two-step mechanism, beginning with FAD-dependent oxidation of the methyl group to an iminium species followed by electrophilic attack on the deprotonated phenol. The sequence is that of N-methyltransferase fsqC from Aspergillus fumigatus (strain ATCC MYA-4609 / CBS 101355 / FGSC A1100 / Af293) (Neosartorya fumigata).